A 391-amino-acid polypeptide reads, in one-letter code: Chorismate synthase (391 aa).

Residues Arg-39 and Arg-45 each coordinate NADP(+). Residues 133 to 135, 254 to 255, Gly-299, 314 to 318, and Arg-340 each bind FMN; these read RAS, QA, and KPIAT.

It belongs to the chorismate synthase family. In terms of assembly, homotetramer. FMNH2 is required as a cofactor.

It catalyses the reaction 5-O-(1-carboxyvinyl)-3-phosphoshikimate = chorismate + phosphate. It functions in the pathway metabolic intermediate biosynthesis; chorismate biosynthesis; chorismate from D-erythrose 4-phosphate and phosphoenolpyruvate: step 7/7. Catalyzes the anti-1,4-elimination of the C-3 phosphate and the C-6 proR hydrogen from 5-enolpyruvylshikimate-3-phosphate (EPSP) to yield chorismate, which is the branch point compound that serves as the starting substrate for the three terminal pathways of aromatic amino acid biosynthesis. This reaction introduces a second double bond into the aromatic ring system. The sequence is that of Chorismate synthase from Symbiobacterium thermophilum (strain DSM 24528 / JCM 14929 / IAM 14863 / T).